A 776-amino-acid chain; its full sequence is Ribosomal biogenesis protein LAS1L (776 aa).

Residues 185-227 (DEDQLDAEDPEEEEREIIADDVLEEIPEPQDDDKDEELAVEDD) show a composition bias toward acidic residues. Residues 185–247 (DEDQLDAEDP…SHPEPSSRHK (63 aa)) form a disordered region. Residues 228–247 (ANTKGNEEVASHPEPSSRHK) are compositionally biased toward basic and acidic residues. 2 positions are modified to phosphoserine: Ser425 and Ser509. The tract at residues 501-646 (KAIEGSSSSS…DYDDDEEEDR (146 aa)) is disordered. Basic and acidic residues predominate over residues 544-557 (GNLKDVKQEEKKEN). Composition is skewed to acidic residues over residues 558–602 (EEEE…EEEE) and 611–646 (MEAD…EEDR). At Ser658 the chain carries Phosphoserine. The segment at 677–696 (SAWQVSSEDVRWGTFPLGRL) is interaction with NOL9. The interval 733 to 759 (SSTLSLCCGGSNTNSSSSSSSGNMEGL) is disordered. Positions 741-755 (GGSNTNSSSSSSSGN) are enriched in low complexity.

It belongs to the LAS1 family. In terms of assembly, component of some MLL1/MLL complex, at least composed of the core components KMT2A/MLL1, ASH2L, HCFC1/HCF1, WDR5 and RBBP5, as well as the facultative components BACC1, CHD8, E2F6, HSP70, INO80C, KANSL1, LAS1L, MAX, MCRS1, MGA, MYST1/MOF, PELP1, PHF20, PRP31, RING2, RUVB1/TIP49A, RUVB2/TIP49B, SENP3, TAF1, TAF4, TAF6, TAF7, TAF9 and TEX10. Component of the 5FMC complex, at least composed of PELP1, LAS1L, TEX10, WDR18 and SENP3; the complex interacts with methylated CHTOP and ZNF148. Interacts with NOL9 to form an ITS2 pre-rRNA endonuclease-kinase complex.

The protein resides in the nucleus. The protein localises to the nucleolus. It is found in the nucleoplasm. It localises to the cytoplasm. In terms of biological role, required for the synthesis of the 60S ribosomal subunit and maturation of the 28S rRNA. Functions as a component of the Five Friends of Methylated CHTOP (5FMC) complex; the 5FMC complex is recruited to ZNF148 by methylated CHTOP, leading to desumoylation of ZNF148 and subsequent transactivation of ZNF148 target genes. Required for the efficient pre-rRNA processing at both ends of internal transcribed spacer 2 (ITS2). The chain is Ribosomal biogenesis protein LAS1L (Las1l) from Mus musculus (Mouse).